Here is a 1912-residue protein sequence, read N- to C-terminus: Protein javelin (1912 aa).

Disordered stretches follow at residues 1 to 32 (MGNG…QHNY), 89 to 145 (GTGL…VGGA), 298 to 377 (RSRH…HRLS), 460 to 515 (QSRR…SLSE), 545 to 586 (TTRT…TLRQ), 764 to 920 (SYNQ…EAPV), 965 to 1010 (IQEN…GKPL), 1257 to 1297 (GINS…GGAA), 1486 to 1507 (EQQE…QYED), and 1881 to 1912 (YDPS…DDKM). Basic residues-rich tracts occupy residues 97-133 (QQLH…HPHA) and 299-313 (SRHK…KKPP). The segment covering 339–354 (ADDTQSQRSNSATCDS) has biased composition (polar residues). Low complexity predominate over residues 355-374 (HQQQQQQQHQPQQQHQQQQH). Over residues 489–498 (EHSQSSVFPE) the composition is skewed to polar residues. The segment covering 499–512 (TTTSNSDDQTDSPS) has biased composition (low complexity). Over residues 553–566 (SEEGEEEQTGEEVV) the composition is skewed to acidic residues. Residues 568–586 (SLTTPTEPQTSDSESTLRQ) show a composition bias toward polar residues. Composition is skewed to basic and acidic residues over residues 772–792 (QRKE…DSIR) and 802–869 (RQRE…RKEE). Residues 890 to 904 (SQQEDTVADVEEEDN) show a composition bias toward acidic residues. A compositionally biased stretch (basic and acidic residues) spans 965-979 (IQENKETSQRIEPKP). Residues 981-990 (PKTNSNSSST) are compositionally biased toward low complexity. Composition is skewed to acidic residues over residues 1494–1507 (LEEE…QYED) and 1903–1912 (ELYDSLDDKM).

It is found in the cytoplasm. It localises to the cytoskeleton. Its function is as follows. Important for normal assembly of actin bundles during bristle formation. This chain is Protein javelin, found in Drosophila melanogaster (Fruit fly).